The sequence spans 119 residues: Single-stranded DNA-binding protein (119 aa).

Residues 3 to 102 (INIVTLVGRV…IRVDQLELLG (100 aa)) enclose the SSB domain.

Homotetramer.

The polypeptide is Single-stranded DNA-binding protein (ssb1) (Anabaena variabilis).